Consider the following 246-residue polypeptide: Probable hydroxyethylthiazole kinase (246 aa).

Met50 provides a ligand contact to substrate. Arg125 and Thr145 together coordinate ATP. Gly172 contributes to the substrate binding site.

The protein belongs to the Thz kinase family. Mg(2+) is required as a cofactor.

It catalyses the reaction 5-(2-hydroxyethyl)-4-methylthiazole + ATP = 4-methyl-5-(2-phosphooxyethyl)-thiazole + ADP + H(+). The protein operates within cofactor biosynthesis; thiamine diphosphate biosynthesis; 4-methyl-5-(2-phosphoethyl)-thiazole from 5-(2-hydroxyethyl)-4-methylthiazole: step 1/1. Functionally, catalyzes the phosphorylation of the hydroxyl group of 4-methyl-5-beta-hydroxyethylthiazole (THZ). The sequence is that of Probable hydroxyethylthiazole kinase (thiM) from Agrobacterium fabrum (strain C58 / ATCC 33970) (Agrobacterium tumefaciens (strain C58)).